Reading from the N-terminus, the 274-residue chain is Penicillin-insensitive murein endopeptidase (274 aa).

The first 19 residues, 1–19 (MKKTAIALLAWFVSSASLA), serve as a signal peptide directing secretion. Disulfide bonds link Cys-44-Cys-265, Cys-187-Cys-235, and Cys-216-Cys-223. 6 residues coordinate Zn(2+): His-110, His-113, Asp-120, Asp-147, His-150, and His-211. The disordered stretch occupies residues 225–274 (DQPLPPPGDGCGAELQSWFEPPKPGTTKPEKKTPPPLPPSCQALLDEHVL).

It belongs to the peptidase M74 family. As to quaternary structure, dimer. Zn(2+) is required as a cofactor.

The protein resides in the periplasm. Its function is as follows. Murein endopeptidase that cleaves the D-alanyl-meso-2,6-diamino-pimelyl amide bond that connects peptidoglycan strands. Likely plays a role in the removal of murein from the sacculus. This is Penicillin-insensitive murein endopeptidase from Salmonella arizonae (strain ATCC BAA-731 / CDC346-86 / RSK2980).